Here is a 334-residue protein sequence, read N- to C-terminus: Tryptophan--tRNA ligase (334 aa).

ATP is bound by residues 12–14 and 20–21; these read QPS and GN. A 'HIGH' region motif is present at residues 13 to 21; that stretch reads PSGIPTLGN. Asp136 contacts L-tryptophan. Residues 148–150, Ile187, and 196–200 contribute to the ATP site; these read GKD and KMSKS. The short motif at 196-200 is the 'KMSKS' region element; the sequence is KMSKS.

It belongs to the class-I aminoacyl-tRNA synthetase family. Homodimer.

Its subcellular location is the cytoplasm. It catalyses the reaction tRNA(Trp) + L-tryptophan + ATP = L-tryptophyl-tRNA(Trp) + AMP + diphosphate + H(+). In terms of biological role, catalyzes the attachment of tryptophan to tRNA(Trp). The sequence is that of Tryptophan--tRNA ligase from Wigglesworthia glossinidia brevipalpis.